A 609-amino-acid polypeptide reads, in one-letter code: MVSILSNIGMMVVTFKRPSLFTSLRRRSANNIIITKHSHPISTTRRSGNYKPTMWDFQFIQSLHNPYEGDKYMKRLNKLKKEVKKMMMTVEGSHDEELEKLELIDNLERLGVSYHFKDEIMQIMRSINININIAPPDSLYTTALKFRLLRQHGFHISQDILNDFKDENGNLKQSICKDTKDILNSSKDEHDNLKQSTCNNTKGLLKLYEASFLSIENESFLRNTTKSTLAHLMRYVDQNRCGEEDNMIVELVVHALELPRHWMVPRLETRWYISIYERMSNANPLLLELAKLDFNIVQATHQQDLRILSRWWKNTGLAEKLPFSRDILVENMFWAVGALFEPQHSYFRRLITKVIVFISIIDDIYDVYGTLDELELFTLAIQRWDTKAMEQLPDYMKVCYLALINIINEVAYEVLKNHDINVLPYLTKSWADLCKSYLQEAKWYHNGYKPNLEEYMDNARISIGVPMVLVHSLFLVTNQITKEALDSLTNYPDIIRWSATIFRLNDDLGTSSDELKRGDVSKSIQCYMNEKGASEEEAIEHIEFLIQETWEAMNTAQSKNSPLSETFIEVAKNITKASHFMYLHSDVKSSISKILFEPIIISNVAFALK.

A chloroplast-targeting transit peptide spans 1–42 (MVSILSNIGMMVVTFKRPSLFTSLRRRSANNIIITKHSHPIS). Residues arginine 325, aspartate 362, aspartate 366, arginine 503, and aspartate 506 each contribute to the (2E)-geranyl diphosphate site. Mg(2+)-binding residues include aspartate 362 and aspartate 366. Positions 362-366 (DDIYD) match the DDXXD motif motif. Mg(2+)-binding residues include aspartate 506, threonine 510, and glutamate 514.

Belongs to the terpene synthase family. Tpsb subfamily. It depends on Mg(2+) as a cofactor. Mn(2+) is required as a cofactor. Highly expressed in young fruits and plant tops. Expressed in flower buds and trichomes of petioles and stems. Expressed at low levels in young leaves, stems, petioles, sepals and petals.

It localises to the plastid. Its subcellular location is the chloroplast. It catalyses the reaction (2E)-geranyl diphosphate + H2O = (R)-linalool + diphosphate. It carries out the reaction (2E,6E)-farnesyl diphosphate + H2O = (6E)-nerolidol + diphosphate. It participates in secondary metabolite biosynthesis; terpenoid biosynthesis. Its function is as follows. Involved in monoterpene (C10) biosynthesis in glandular trichomes. Converts geranyl diphosphate to linalool in glandular trichomes in response to jasmonate (JA). Can convert farnesyl diphosphate to nerolidol in vitro. The protein is (R)-linalool synthase TPS5, chloroplastic of Solanum lycopersicum (Tomato).